A 469-amino-acid chain; its full sequence is Dihydrolipoyl dehydrogenase (469 aa).

Residues 40 to 48 (EKASLGGVC), Lys57, and Ala120 contribute to the FAD site. A disulfide bridge links Cys48 with Cys53. Residues 186-190 (GGGAI), Glu209, and 275-278 (AVGV) contribute to the NAD(+) site. The FAD site is built by Asp317 and Ala325. The Proton acceptor role is filled by His450.

This sequence belongs to the class-I pyridine nucleotide-disulfide oxidoreductase family. In terms of assembly, homodimer. The cofactor is FAD.

It localises to the cytoplasm. The catalysed reaction is N(6)-[(R)-dihydrolipoyl]-L-lysyl-[protein] + NAD(+) = N(6)-[(R)-lipoyl]-L-lysyl-[protein] + NADH + H(+). Functionally, lipoamide dehydrogenase is a component of the alpha-ketoacid dehydrogenase complexes. The chain is Dihydrolipoyl dehydrogenase (lpd) from Chlorobaculum parvum (strain DSM 263 / NCIMB 8327) (Chlorobium vibrioforme subsp. thiosulfatophilum).